A 569-amino-acid chain; its full sequence is Urease subunit beta (569 aa).

A Urease domain is found at 131 to 569 (GGIDTHIHFI…VSLAQLFSIF (439 aa)). 3 residues coordinate Ni(2+): histidine 136, histidine 138, and lysine 219. Position 219 is an N6-carboxylysine (lysine 219). Histidine 221 provides a ligand contact to substrate. Ni(2+) is bound by residues histidine 248 and histidine 274. Histidine 322 serves as the catalytic Proton donor. Aspartate 362 serves as a coordination point for Ni(2+).

It belongs to the metallo-dependent hydrolases superfamily. Urease alpha subunit family. As to quaternary structure, heterohexamer of 3 UreA (alpha) and 3 UreB (beta) subunits. Ni cation serves as cofactor. Carboxylation allows a single lysine to coordinate two nickel ions.

It localises to the cytoplasm. It carries out the reaction urea + 2 H2O + H(+) = hydrogencarbonate + 2 NH4(+). The protein operates within nitrogen metabolism; urea degradation; CO(2) and NH(3) from urea (urease route): step 1/1. In Helicobacter pylori (strain P12), this protein is Urease subunit beta.